Here is a 141-residue protein sequence, read N- to C-terminus: Cystatin (141 aa).

The N-terminal stretch at 1 to 26 (MVHSQLPVAAPLRLLCALLLLPSATM) is a signal peptide. In terms of domain architecture, Cystatin spans 29–129 (GGLSPRSVTD…CHFQVWSRPW (101 aa)). A Secondary area of contact motif is present at residues 73–77 (QVVAG). 2 disulfides stabilise this stretch: cysteine 91–cysteine 107 and cysteine 120–cysteine 140.

This sequence belongs to the cystatin family. In terms of tissue distribution, expressed at a low level by the venom gland (at protein level).

The protein resides in the secreted. Inhibits various C1 cysteine proteases including cathepsin L, papain and cathepsin B. This protein has no toxic activity and its function in the venom is unknown. It may play a role as a housekeeping or regulatory protein. In Oxyuranus scutellatus scutellatus (Australian taipan), this protein is Cystatin.